Reading from the N-terminus, the 458-residue chain is Probable alpha-L-glutamate ligase (458 aa).

Positions 1–162 (MSDNKFIIGS…YGVKTAKKSG (162 aa)) are unknown. The segment at 163 to 458 (LKIGLLASNP…IEKKLGWKAD (296 aa)) is alpha-L-glutamate ligase. The ATP-grasp domain occupies 267-450 (LQLLQKNNLD…IAGAMIESIE (184 aa)). Residues Lys304, 341 to 342 (EF), Asp350, and 374 to 376 (RAN) each bind ATP. Mg(2+) contacts are provided by Asp411, Glu423, and Asn425. Mn(2+) contacts are provided by Asp411, Glu423, and Asn425.

It in the C-terminal section; belongs to the RimK family. The cofactor is Mg(2+). Mn(2+) serves as cofactor.

The protein is Probable alpha-L-glutamate ligase of Shewanella pealeana (strain ATCC 700345 / ANG-SQ1).